The following is a 124-amino-acid chain: Fluoride-specific ion channel FluC 2 (124 aa).

Transmembrane regions (helical) follow at residues 36 to 56 (TFLI…YLAF), 66 to 86 (LFVM…SLDT), and 100 to 120 (LYAI…LALV). Gly-74 and Thr-77 together coordinate Na(+).

The protein belongs to the fluoride channel Fluc/FEX (TC 1.A.43) family.

It localises to the cell inner membrane. The enzyme catalyses fluoride(in) = fluoride(out). Na(+) is not transported, but it plays an essential structural role and its presence is essential for fluoride channel function. In terms of biological role, fluoride-specific ion channel. Important for reducing fluoride concentration in the cell, thus reducing its toxicity. The sequence is that of Fluoride-specific ion channel FluC 2 from Nitrobacter hamburgensis (strain DSM 10229 / NCIMB 13809 / X14).